The chain runs to 547 residues: GMP synthase [glutamine-hydrolyzing] (547 aa).

In terms of domain architecture, Glutamine amidotransferase type-1 spans Lys-12–Asp-210. Cys-89 acts as the Nucleophile in catalysis. Catalysis depends on residues His-184 and Glu-186. Residues Trp-211–Arg-403 enclose the GMPS ATP-PPase domain. Position 238-244 (Ser-238–Ser-244) interacts with ATP.

As to quaternary structure, homodimer.

It carries out the reaction XMP + L-glutamine + ATP + H2O = GMP + L-glutamate + AMP + diphosphate + 2 H(+). It functions in the pathway purine metabolism; GMP biosynthesis; GMP from XMP (L-Gln route): step 1/1. Catalyzes the synthesis of GMP from XMP. The sequence is that of GMP synthase [glutamine-hydrolyzing] from Burkholderia pseudomallei (strain 1710b).